A 295-amino-acid chain; its full sequence is Diaminopimelate epimerase (295 aa).

Substrate contacts are provided by N13, Q46, and N66. The Proton donor role is filled by C75. Substrate-binding positions include 76-77 (GN), N162, N195, and 213-214 (ER). Residue C222 is the Proton acceptor of the active site. 223-224 (GT) contacts substrate.

It belongs to the diaminopimelate epimerase family. In terms of assembly, homodimer.

The protein localises to the cytoplasm. It carries out the reaction (2S,6S)-2,6-diaminopimelate = meso-2,6-diaminopimelate. The protein operates within amino-acid biosynthesis; L-lysine biosynthesis via DAP pathway; DL-2,6-diaminopimelate from LL-2,6-diaminopimelate: step 1/1. Functionally, catalyzes the stereoinversion of LL-2,6-diaminopimelate (L,L-DAP) to meso-diaminopimelate (meso-DAP), a precursor of L-lysine and an essential component of the bacterial peptidoglycan. The polypeptide is Diaminopimelate epimerase (Psychrobacter cryohalolentis (strain ATCC BAA-1226 / DSM 17306 / VKM B-2378 / K5)).